Consider the following 137-residue polypeptide: Protein archease (137 aa).

Ca(2+) contacts are provided by aspartate 11, aspartate 136, and isoleucine 137.

This sequence belongs to the archease family.

In terms of biological role, activates the tRNA-splicing ligase complex by facilitating the enzymatic turnover of catalytic subunit RtcB. Acts by promoting the guanylylation of RtcB, a key intermediate step in tRNA ligation. Can also alter the NTP specificity of RtcB such that ATP, dGTP or ITP is used efficiently. The polypeptide is Protein archease (Archaeoglobus fulgidus (strain ATCC 49558 / DSM 4304 / JCM 9628 / NBRC 100126 / VC-16)).